Reading from the N-terminus, the 119-residue chain is Ribosome-binding factor A (119 aa).

It belongs to the RbfA family. As to quaternary structure, monomer. Binds 30S ribosomal subunits, but not 50S ribosomal subunits or 70S ribosomes.

It is found in the cytoplasm. Functionally, one of several proteins that assist in the late maturation steps of the functional core of the 30S ribosomal subunit. Associates with free 30S ribosomal subunits (but not with 30S subunits that are part of 70S ribosomes or polysomes). Required for efficient processing of 16S rRNA. May interact with the 5'-terminal helix region of 16S rRNA. The chain is Ribosome-binding factor A from Mycoplasmoides gallisepticum (strain R(low / passage 15 / clone 2)) (Mycoplasma gallisepticum).